The chain runs to 566 residues: Serine/threonine-protein kinase PknE (566 aa).

Residues 1 to 337 (MDGTAESREG…PLPRSARQPW (337 aa)) lie on the Cytoplasmic side of the membrane. Phosphoserine; by autocatalysis is present on S7. The residue at position 11 (T11) is a Phosphothreonine; by autocatalysis. Positions 16–275 (YRLRRLVGRG…DLSAAAHAAL (260 aa)) constitute a Protein kinase domain. Residues 22-30 (VGRGGMGDV) and K45 each bind ATP. Phosphothreonine; by autocatalysis is present on residues T50 and T59. The Proton acceptor role is filled by D139. Phosphothreonine; by autocatalysis occurs at positions 170, 175, and 178. A disordered region spans residues 296–330 (PVPSTHPVSPGTRWPQPTPWAGGAPPWGPPSSPLP). The chain crosses the membrane as a helical span at residues 338-358 (LWVGVAVAVVVALAGGLGIAL). Topologically, residues 359–566 (AHPWRSSGPR…DPSWLARLIG (208 aa)) are extracellular.

It belongs to the protein kinase superfamily. Ser/Thr protein kinase family. As to quaternary structure, homodimer. Post-translationally, autophosphorylated on serine and threonine residues. Dephosphorylated by PstP.

It is found in the cell membrane. The catalysed reaction is L-seryl-[protein] + ATP = O-phospho-L-seryl-[protein] + ADP + H(+). It catalyses the reaction L-threonyl-[protein] + ATP = O-phospho-L-threonyl-[protein] + ADP + H(+). In terms of biological role, a serine/threonine-protein kinase, acts on HupB in vitro, modifying at least 2 Ser and 8 Thr residues. Important for bacterial survival in the host during infection. The polypeptide is Serine/threonine-protein kinase PknE (Mycobacterium tuberculosis (strain ATCC 25177 / H37Ra)).